Reading from the N-terminus, the 447-residue chain is NADP-specific glutamate dehydrogenase (447 aa).

Residues Lys92, Gln113, and Lys116 each contribute to the substrate site. The Proton donor role is filled by Lys128. Gly167 is a substrate binding site. Residues Thr211 and Asn242 each coordinate NADP(+). Substrate is bound at residue Ser380.

Belongs to the Glu/Leu/Phe/Val dehydrogenases family. As to quaternary structure, homohexamer.

It carries out the reaction L-glutamate + NADP(+) + H2O = 2-oxoglutarate + NH4(+) + NADPH + H(+). In terms of biological role, catalyzes the reversible oxidative deamination of glutamate to alpha-ketoglutarate and ammonia. In Salmonella typhi, this protein is NADP-specific glutamate dehydrogenase (gdhA).